Here is a 210-residue protein sequence, read N- to C-terminus: Dephospho-CoA kinase (210 aa).

One can recognise a DPCK domain in the interval 4 to 202 (WVGLTGGIGS…AFYSGIFASK (199 aa)). Residue 12–17 (GSGKSA) coordinates ATP.

The protein belongs to the CoaE family.

It is found in the cytoplasm. The enzyme catalyses 3'-dephospho-CoA + ATP = ADP + CoA + H(+). Its pathway is cofactor biosynthesis; coenzyme A biosynthesis; CoA from (R)-pantothenate: step 5/5. In terms of biological role, catalyzes the phosphorylation of the 3'-hydroxyl group of dephosphocoenzyme A to form coenzyme A. The protein is Dephospho-CoA kinase of Neisseria meningitidis serogroup B (strain ATCC BAA-335 / MC58).